The sequence spans 198 residues: Protein C4 (198 aa).

Positions 1–36 (MFNPRHPGGEFFGRKHHRRHAPDGRSSSSSSSSSEC) are disordered.

The protein is Protein C4 (C4) of Giardia intestinalis (Giardia lamblia).